The primary structure comprises 345 residues: NADH-ubiquinone oxidoreductase chain 2 (345 aa).

Transmembrane regions (helical) follow at residues 1 to 21 (MNPIINLILLSSMIAGTILTM), 25 to 45 (HWVSAWLGLELNTLAIIPIIS), 59 to 79 (YFLIQAASSALFLLSGITNAY), 96 to 116 (IMLSVALATKLGLAPIHFWLP), 123 to 143 (PMITALIITTWQKIAPMALLI), 148 to 168 (LIPPTITLIMGLLSTIIGGLG), 191 to 211 (ITITTITPSLALFNLTLYILL), 240 to 260 (TASLFLLSLLSLGGLPPLSGF), 274 to 294 (HLTPLALLMAITALLSLMFYL), and 324 to 344 (SLLSSLILLSLFLLPITPLMI).

It belongs to the complex I subunit 2 family.

The protein localises to the mitochondrion inner membrane. The enzyme catalyses a ubiquinone + NADH + 5 H(+)(in) = a ubiquinol + NAD(+) + 4 H(+)(out). Functionally, core subunit of the mitochondrial membrane respiratory chain NADH dehydrogenase (Complex I) that is believed to belong to the minimal assembly required for catalysis. Complex I functions in the transfer of electrons from NADH to the respiratory chain. The immediate electron acceptor for the enzyme is believed to be ubiquinone. The polypeptide is NADH-ubiquinone oxidoreductase chain 2 (MT-ND2) (Varanus timorensis (Timor monitor)).